The primary structure comprises 315 residues: Putative methyltransferase SPBC8D2.16c (315 aa).

The protein belongs to the class IV-like SAM-binding methyltransferase superfamily.

Its subcellular location is the cytoplasm. The protein resides in the nucleus. The polypeptide is Putative methyltransferase SPBC8D2.16c (Schizosaccharomyces pombe (strain 972 / ATCC 24843) (Fission yeast)).